The chain runs to 440 residues: Protein naked cuticle homolog 1 (440 aa).

Gly-2 carries N-myristoyl glycine lipidation. Positions Glu-129–Val-164 constitute an EF-hand domain. Residues Asp-142, Asp-144, Asn-146, Lys-148, and Asp-153 each coordinate Ca(2+). Positions Arg-192–Pro-204 are enriched in polar residues. Disordered regions lie at residues Arg-192–Glu-221, Ala-272–Lys-379, and Arg-421–Ser-440. The span at Glu-211–Glu-221 shows a compositional bias: basic and acidic residues. Residues Ala-272–Ser-293 are compositionally biased toward low complexity. Residues Arg-324 to Arg-336 show a composition bias toward basic residues. The span at Ala-352–Thr-362 shows a compositional bias: pro residues. Residues His-422–Ser-440 show a composition bias toward basic residues.

Belongs to the NKD family.

The protein resides in the cell membrane. It is found in the cytoplasm. Functionally, cell autonomous antagonist of the canonical Wnt signaling pathway. May activate a second Wnt signaling pathway that controls planar cell polarity. This chain is Protein naked cuticle homolog 1 (nkd1), found in Danio rerio (Zebrafish).